The chain runs to 273 residues: Ribosomal RNA small subunit methyltransferase A (273 aa).

6 residues coordinate S-adenosyl-L-methionine: Asn18, Leu20, Gly45, Glu66, Asp91, and Asn113.

Belongs to the class I-like SAM-binding methyltransferase superfamily. rRNA adenine N(6)-methyltransferase family. RsmA subfamily.

It localises to the cytoplasm. It carries out the reaction adenosine(1518)/adenosine(1519) in 16S rRNA + 4 S-adenosyl-L-methionine = N(6)-dimethyladenosine(1518)/N(6)-dimethyladenosine(1519) in 16S rRNA + 4 S-adenosyl-L-homocysteine + 4 H(+). Functionally, specifically dimethylates two adjacent adenosines (A1518 and A1519) in the loop of a conserved hairpin near the 3'-end of 16S rRNA in the 30S particle. May play a critical role in biogenesis of 30S subunits. This Escherichia coli O17:K52:H18 (strain UMN026 / ExPEC) protein is Ribosomal RNA small subunit methyltransferase A.